The chain runs to 190 residues: UPF0232 protein SCO3875 (190 aa).

Disordered regions lie at residues 1-70 (MSAD…GRDP) and 163-190 (GPGGPGGPGRRYGPLRAPGSQGPGDTYG). Low complexity predominate over residues 26 to 35 (GVDLARVALR). A compositionally biased stretch (basic and acidic residues) spans 36 to 45 (AAREAARARG). Over residues 163 to 172 (GPGGPGGPGR) the composition is skewed to gly residues.

Belongs to the UPF0232 family.

In Streptomyces coelicolor (strain ATCC BAA-471 / A3(2) / M145), this protein is UPF0232 protein SCO3875.